The chain runs to 495 residues: ATP synthase subunit alpha, chloroplastic (495 aa).

170 to 177 (GDRQTGKT) serves as a coordination point for ATP.

This sequence belongs to the ATPase alpha/beta chains family. As to quaternary structure, F-type ATPases have 2 components, CF(1) - the catalytic core - and CF(0) - the membrane proton channel. CF(1) has five subunits: alpha(3), beta(3), gamma(1), delta(1), epsilon(1). CF(0) has four main subunits: a, b, b' and c.

It is found in the plastid. The protein localises to the chloroplast thylakoid membrane. It catalyses the reaction ATP + H2O + 4 H(+)(in) = ADP + phosphate + 5 H(+)(out). Functionally, produces ATP from ADP in the presence of a proton gradient across the membrane. The alpha chain is a regulatory subunit. This Cyanidioschyzon merolae (strain NIES-3377 / 10D) (Unicellular red alga) protein is ATP synthase subunit alpha, chloroplastic.